The primary structure comprises 461 residues: Growth/differentiation factor 7 (461 aa).

The first 19 residues, 1-19 (MDLSAAAALCLWLLSACRP), serve as a signal peptide directing secretion. A propeptide spanning residues 20–315 (RDGLEAAAVL…ANLGGRRRRR (296 aa)) is cleaved from the precursor. N-linked (GlcNAc...) asparagine glycosylation is present at Asn-79. The tract at residues 287–360 (LRAAAEPPPD…GHGRRGRSRC (74 aa)) is disordered. Gly residues predominate over residues 323 to 350 (GAQGSGGGGGGGGGGGGGGGGGGGGAGR). The segment covering 351–360 (GHGRRGRSRC) has biased composition (basic residues). 3 disulfides stabilise this stretch: Cys-360–Cys-426, Cys-389–Cys-458, and Cys-393–Cys-460.

The protein belongs to the TGF-beta family. In terms of assembly, homodimer; disulfide-linked.

It localises to the secreted. This chain is Growth/differentiation factor 7 (Gdf7), found in Mus musculus (Mouse).